We begin with the raw amino-acid sequence, 215 residues long: Elongation factor Ts (215 aa).

Residues 80–83 form an involved in Mg(2+) ion dislocation from EF-Tu region; the sequence is TDFV.

This sequence belongs to the EF-Ts family.

The protein localises to the cytoplasm. In terms of biological role, associates with the EF-Tu.GDP complex and induces the exchange of GDP to GTP. It remains bound to the aminoacyl-tRNA.EF-Tu.GTP complex up to the GTP hydrolysis stage on the ribosome. The chain is Elongation factor Ts from Alkaliphilus metalliredigens (strain QYMF).